Reading from the N-terminus, the 320-residue chain is Ferrochelatase (320 aa).

Residues His-194 and Glu-275 each coordinate Fe cation.

The protein belongs to the ferrochelatase family. Monomer.

It is found in the cytoplasm. The enzyme catalyses heme b + 2 H(+) = protoporphyrin IX + Fe(2+). Its pathway is porphyrin-containing compound metabolism; protoheme biosynthesis; protoheme from protoporphyrin-IX: step 1/1. Functionally, catalyzes the ferrous insertion into protoporphyrin IX. This Shigella flexneri serotype 5b (strain 8401) protein is Ferrochelatase.